We begin with the raw amino-acid sequence, 241 residues long: Small ribosomal subunit protein uS2 (241 aa).

Belongs to the universal ribosomal protein uS2 family.

The chain is Small ribosomal subunit protein uS2 from Salmonella agona (strain SL483).